A 311-amino-acid chain; its full sequence is MQAPPPEHCPGVESEQAGQVSACAGCPNQSICSDPNKKREDPGKALVAAALKDVKHKLLILSGKGGVGKSTVTTLLTRYLARSYPDSNFGVLDIDICGPSQPRLMGALGENVHQSGSGWSPVGIDDNVCLMSIGFLLGSVDDAIIWRGPKKNGMIRQFLSEVDWGNLDLLLLDTPPGTSDEHLSVVSYLKDDSSPDSVHAIIVTTPQEVALLDVRKEINFCKKQQIPIVGVIENMSGFQCGHCGHSSEIFPAKTGGAAAMCAEMEVPLLGSLPLDPAIAKACDAGEDITSVKNPTTEALEGICSKIMSSFN.

[4Fe-4S] cluster contacts are provided by Cys-9, Cys-23, Cys-26, and Cys-32. 63–70 (GKGGVGKS) is an ATP binding site. [4Fe-4S] cluster-binding residues include Cys-240 and Cys-243.

The protein belongs to the Mrp/NBP35 ATP-binding proteins family. NUBP1/NBP35 subfamily. In terms of assembly, heterotetramer of 2 Nubp1 and 2 Nubp2 chains. The cofactor is [4Fe-4S] cluster.

The protein resides in the cytoplasm. Component of the cytosolic iron-sulfur (Fe/S) protein assembly (CIA) machinery. Required for maturation of extramitochondrial Fe-S proteins. The Nubp1-Nubp2 heterotetramer forms a Fe-S scaffold complex, mediating the de novo assembly of an Fe-S cluster and its transfer to target apoproteins. This Drosophila pseudoobscura pseudoobscura (Fruit fly) protein is Cytosolic Fe-S cluster assembly factor Nubp1 homolog.